The chain runs to 726 residues: Dipeptidyl-peptidase 5 (726 aa).

Positions Met-1–Ala-19 are cleaved as a signal peptide. Asn-96 and Asn-252 each carry an N-linked (GlcNAc...) asparagine glycan. The interval Val-268 to Val-292 is disordered. N-linked (GlcNAc...) asparagine glycosylation is present at Asn-485. Ser-558 functions as the Charge relay system in the catalytic mechanism. The N-linked (GlcNAc...) asparagine glycan is linked to Asn-605. Residues Asp-641 and His-673 each act as charge relay system in the active site. The N-linked (GlcNAc...) asparagine glycan is linked to Asn-699.

This sequence belongs to the peptidase S9C family.

It localises to the secreted. Functionally, extracellular dipeptidyl-peptidase which removes N-terminal dipeptides sequentially from polypeptides having unsubstituted N-termini. Contributes to pathogenicity. The sequence is that of Dipeptidyl-peptidase 5 (DPP5) from Arthroderma otae (Microsporum canis).